Reading from the N-terminus, the 80-residue chain is D-alanyl carrier protein 1 (80 aa).

Positions 1–80 (MTMDDTKATV…KIVAKVENLQ (80 aa)) constitute a Carrier domain. Ser-38 bears the O-(pantetheine 4'-phosphoryl)serine mark.

This sequence belongs to the DltC family. Post-translationally, 4'-phosphopantetheine is transferred from CoA to a specific serine of apo-DCP.

The protein resides in the cytoplasm. It functions in the pathway cell wall biogenesis; lipoteichoic acid biosynthesis. Its function is as follows. Carrier protein involved in the D-alanylation of lipoteichoic acid (LTA). The loading of thioester-linked D-alanine onto DltC is catalyzed by D-alanine--D-alanyl carrier protein ligase DltA. The DltC-carried D-alanyl group is further transferred to cell membrane phosphatidylglycerol (PG) by forming an ester bond, probably catalyzed by DltD. D-alanylation of LTA plays an important role in modulating the properties of the cell wall in Gram-positive bacteria, influencing the net charge of the cell wall. This is D-alanyl carrier protein 1 from Lactiplantibacillus plantarum (strain ATCC BAA-793 / NCIMB 8826 / WCFS1) (Lactobacillus plantarum).